We begin with the raw amino-acid sequence, 682 residues long: UvrABC system protein B (682 aa).

The region spanning 27-414 (DNIRAGVAHQ…SEGIVVEQII (388 aa)) is the Helicase ATP-binding domain. 40–47 (GVTGSGKT) provides a ligand contact to ATP. Positions 93 to 116 (YYDYYQPEAYVPTSDTYIEKDSSI) match the Beta-hairpin motif. The 163-residue stretch at 432 to 594 (QMEDLMTECR…IEPVSVRKSL (163 aa)) folds into the Helicase C-terminal domain. A disordered region spans residues 609 to 628 (AAKGRGKGRGRQAAPAQTAA). Positions 642–677 (GGLIQRLEREMRESARDLEFEKAAELRDRIRMLRER) constitute a UVR domain.

The protein belongs to the UvrB family. As to quaternary structure, forms a heterotetramer with UvrA during the search for lesions. Interacts with UvrC in an incision complex.

Its subcellular location is the cytoplasm. In terms of biological role, the UvrABC repair system catalyzes the recognition and processing of DNA lesions. A damage recognition complex composed of 2 UvrA and 2 UvrB subunits scans DNA for abnormalities. Upon binding of the UvrA(2)B(2) complex to a putative damaged site, the DNA wraps around one UvrB monomer. DNA wrap is dependent on ATP binding by UvrB and probably causes local melting of the DNA helix, facilitating insertion of UvrB beta-hairpin between the DNA strands. Then UvrB probes one DNA strand for the presence of a lesion. If a lesion is found the UvrA subunits dissociate and the UvrB-DNA preincision complex is formed. This complex is subsequently bound by UvrC and the second UvrB is released. If no lesion is found, the DNA wraps around the other UvrB subunit that will check the other stand for damage. This chain is UvrABC system protein B, found in Oleidesulfovibrio alaskensis (strain ATCC BAA-1058 / DSM 17464 / G20) (Desulfovibrio alaskensis).